We begin with the raw amino-acid sequence, 161 residues long: Nucleotide-binding protein Rmet_2899 (161 aa).

The protein belongs to the YajQ family.

In terms of biological role, nucleotide-binding protein. In Cupriavidus metallidurans (strain ATCC 43123 / DSM 2839 / NBRC 102507 / CH34) (Ralstonia metallidurans), this protein is Nucleotide-binding protein Rmet_2899.